Reading from the N-terminus, the 476-residue chain is Salicylate biosynthesis isochorismate synthase (476 aa).

Residues 181–202 are disordered; the sequence is RRRPSGPTAGAQGDASAQERRQ.

Belongs to the isochorismate synthase family.

It catalyses the reaction chorismate = isochorismate. Its pathway is siderophore biosynthesis; salicylate biosynthesis. Involved in the conversion of chorismate to salicylate. The protein is Salicylate biosynthesis isochorismate synthase (pchA) of Pseudomonas aeruginosa (strain ATCC 15692 / DSM 22644 / CIP 104116 / JCM 14847 / LMG 12228 / 1C / PRS 101 / PAO1).